Consider the following 270-residue polypeptide: Glucosamine-6-phosphate deaminase (270 aa).

The Proton acceptor; for enolization step role is filled by aspartate 72. Aspartate 141 serves as the catalytic For ring-opening step. Histidine 143 serves as the catalytic Proton acceptor; for ring-opening step. Glutamate 148 (for ring-opening step) is an active-site residue.

The protein belongs to the glucosamine/galactosamine-6-phosphate isomerase family. NagB subfamily.

The catalysed reaction is alpha-D-glucosamine 6-phosphate + H2O = beta-D-fructose 6-phosphate + NH4(+). Its pathway is amino-sugar metabolism; N-acetylneuraminate degradation; D-fructose 6-phosphate from N-acetylneuraminate: step 5/5. With respect to regulation, allosterically activated by N-acetylglucosamine 6-phosphate (GlcNAc6P). Catalyzes the reversible isomerization-deamination of glucosamine 6-phosphate (GlcN6P) to form fructose 6-phosphate (Fru6P) and ammonium ion. This is Glucosamine-6-phosphate deaminase from Bacteroides fragilis (strain ATCC 25285 / DSM 2151 / CCUG 4856 / JCM 11019 / LMG 10263 / NCTC 9343 / Onslow / VPI 2553 / EN-2).